Reading from the N-terminus, the 249-residue chain is Probable cobalt-factor III C(17)-methyltransferase (249 aa).

Belongs to the precorrin methyltransferase family.

It carries out the reaction Co(II)-factor III + S-adenosyl-L-methionine + H(+) = Co(II)-factor IV + S-adenosyl-L-homocysteine. It functions in the pathway cofactor biosynthesis; adenosylcobalamin biosynthesis; cob(II)yrinate a,c-diamide from sirohydrochlorin (anaerobic route): step 3/10. Functionally, methyltransferase that likely catalyzes the ring contraction and methylation of C-17 in cobalt-factor III to form cobalt-factor IV. May also convert cobalt-precorrin-3 to cobalt-precorrin-4. In Methanocaldococcus jannaschii (strain ATCC 43067 / DSM 2661 / JAL-1 / JCM 10045 / NBRC 100440) (Methanococcus jannaschii), this protein is Probable cobalt-factor III C(17)-methyltransferase (cbiH).